The primary structure comprises 259 residues: Imidazole glycerol phosphate synthase subunit HisF (259 aa).

Residues D11 and D130 contribute to the active site.

Belongs to the HisA/HisF family. Heterodimer of HisH and HisF.

It is found in the cytoplasm. The catalysed reaction is 5-[(5-phospho-1-deoxy-D-ribulos-1-ylimino)methylamino]-1-(5-phospho-beta-D-ribosyl)imidazole-4-carboxamide + L-glutamine = D-erythro-1-(imidazol-4-yl)glycerol 3-phosphate + 5-amino-1-(5-phospho-beta-D-ribosyl)imidazole-4-carboxamide + L-glutamate + H(+). Its pathway is amino-acid biosynthesis; L-histidine biosynthesis; L-histidine from 5-phospho-alpha-D-ribose 1-diphosphate: step 5/9. Its function is as follows. IGPS catalyzes the conversion of PRFAR and glutamine to IGP, AICAR and glutamate. The HisF subunit catalyzes the cyclization activity that produces IGP and AICAR from PRFAR using the ammonia provided by the HisH subunit. In Lactococcus lactis subsp. cremoris (strain SK11), this protein is Imidazole glycerol phosphate synthase subunit HisF.